Here is a 681-residue protein sequence, read N- to C-terminus: Probable L-type lectin-domain containing receptor kinase S.7 (681 aa).

Residues 1 to 21 (MSLSRKLLVIFFTWITALSMS) form the signal peptide. Residues 22–305 (KPIFVSSDNM…PSKKRRHRHN (284 aa)) are Extracellular-facing. The legume-lectin like stretch occupies residues 30–265 (NMNFTFKSFT…IHLIENWSFK (236 aa)). N-linked (GlcNAc...) asparagine glycosylation is found at Asn32, Asn42, Asn86, Asn121, Asn135, Asn261, and Asn281. Residues 306–326 (LAIGLGISCPVLICLALFVFG) form a helical membrane-spanning segment. At 327 to 681 (YFTLKKWKSV…EGDSIVYVVS (355 aa)) the chain is on the cytoplasmic side. The Protein kinase domain maps to 365 to 643 (FHSSRVIGRG…RVLQILNNEI (279 aa)). ATP-binding positions include 371–379 (IGRGAFGNV) and Lys394. Catalysis depends on Asp493, which acts as the Proton acceptor.

The protein in the C-terminal section; belongs to the protein kinase superfamily. Ser/Thr protein kinase family. In the N-terminal section; belongs to the leguminous lectin family.

It localises to the cell membrane. The enzyme catalyses L-seryl-[protein] + ATP = O-phospho-L-seryl-[protein] + ADP + H(+). It catalyses the reaction L-threonyl-[protein] + ATP = O-phospho-L-threonyl-[protein] + ADP + H(+). Functionally, involved in resistance response to the pathogenic oomycetes Phytophthora infestans and Phytophthora capsici. The sequence is that of Probable L-type lectin-domain containing receptor kinase S.7 from Arabidopsis thaliana (Mouse-ear cress).